We begin with the raw amino-acid sequence, 46 residues long: Late transcription unit A protein (46 aa).

The polypeptide is Late transcription unit A protein (ltuA) (Chlamydia muridarum (strain MoPn / Nigg)).